The primary structure comprises 159 residues: MNVVQGNIEAKNAKVAIVISRFNSFLVESLLEGALDTLKRFGQVSDDNITVVRVPGAVELPLAARRVAASGKFDGIIALGAVIRGGTPHFDFVAGECNKGLAQVALEFDLPVAFGVLTTDTIEQAIERSGTKAGNKGGEAALSLLEMVNVLQELEQQLL.

5-amino-6-(D-ribitylamino)uracil is bound by residues F22, 57-59, and 81-83; these read AVE and AVI. Residue 86–87 coordinates (2S)-2-hydroxy-3-oxobutyl phosphate; that stretch reads GT. Catalysis depends on H89, which acts as the Proton donor. A 5-amino-6-(D-ribitylamino)uracil-binding site is contributed by F114. Residue R128 participates in (2S)-2-hydroxy-3-oxobutyl phosphate binding.

It belongs to the DMRL synthase family. In terms of assembly, forms an icosahedral capsid composed of 60 subunits, arranged as a dodecamer of pentamers.

It catalyses the reaction (2S)-2-hydroxy-3-oxobutyl phosphate + 5-amino-6-(D-ribitylamino)uracil = 6,7-dimethyl-8-(1-D-ribityl)lumazine + phosphate + 2 H2O + H(+). The protein operates within cofactor biosynthesis; riboflavin biosynthesis; riboflavin from 2-hydroxy-3-oxobutyl phosphate and 5-amino-6-(D-ribitylamino)uracil: step 1/2. In terms of biological role, catalyzes the formation of 6,7-dimethyl-8-ribityllumazine by condensation of 5-amino-6-(D-ribitylamino)uracil with 3,4-dihydroxy-2-butanone 4-phosphate. This is the penultimate step in the biosynthesis of riboflavin. This Shewanella baltica (strain OS155 / ATCC BAA-1091) protein is 6,7-dimethyl-8-ribityllumazine synthase.